The following is an 85-amino-acid chain: RNA-binding protein Hfq (85 aa).

In terms of domain architecture, Sm spans 9–68 (DPFLNALRRERIPVSIYLVNGIKLQGQIESFDQFVVLLKNTVSQMVYKHAISTVVPARIP).

It belongs to the Hfq family. In terms of assembly, homohexamer.

Functionally, RNA chaperone that binds small regulatory RNA (sRNAs) and mRNAs to facilitate mRNA translational regulation in response to envelope stress, environmental stress and changes in metabolite concentrations. Also binds with high specificity to tRNAs. The polypeptide is RNA-binding protein Hfq (Idiomarina loihiensis (strain ATCC BAA-735 / DSM 15497 / L2-TR)).